A 130-amino-acid polypeptide reads, in one-letter code: Small ribosomal subunit protein uS11 (130 aa).

Belongs to the universal ribosomal protein uS11 family. In terms of assembly, part of the 30S ribosomal subunit. Interacts with proteins S7 and S18. Binds to IF-3.

Located on the platform of the 30S subunit, it bridges several disparate RNA helices of the 16S rRNA. Forms part of the Shine-Dalgarno cleft in the 70S ribosome. The polypeptide is Small ribosomal subunit protein uS11 (Gloeobacter violaceus (strain ATCC 29082 / PCC 7421)).